The sequence spans 243 residues: MNTSQDTIYAQAYENISDFQFDEKVAGVFNDMIRRSVPGYGQIINTLGDFANQYVTTDSNIYDLGCSLGAATLSIRRHIDNRNCKIIAVDNSESMIQRCRENLSAYVSETPVDLVCGDIRDIKIENASMVVLNFTMQFLAPKDRDSLLSNIYKGLRPGGILVLSEKLNFEDESIQSLLVDLHLDFKRANGYSELEISQKRSSLEHVMKPDTLEQHGARLKKQGFKHFNVWFQCFNFASMVAIK.

Residues Y40, 65–67, 90–91, 118–119, N133, and R200 each bind S-adenosyl-L-methionine; these read GCS, DN, and DI.

Belongs to the class I-like SAM-binding methyltransferase superfamily. Cx-SAM synthase family. In terms of assembly, homodimer.

It catalyses the reaction prephenate + S-adenosyl-L-methionine = carboxy-S-adenosyl-L-methionine + 3-phenylpyruvate + H2O. In terms of biological role, catalyzes the conversion of S-adenosyl-L-methionine (SAM) to carboxy-S-adenosyl-L-methionine (Cx-SAM). In Shewanella sediminis (strain HAW-EB3), this protein is Carboxy-S-adenosyl-L-methionine synthase.